Here is a 363-residue protein sequence, read N- to C-terminus: L-arabinitol 4-dehydrogenase (363 aa).

Positions 53, 78, 79, 108, 111, 114, 122, and 163 each coordinate Zn(2+). Residues 190 to 191, Asp211, Arg216, Ile282, and 306 to 308 contribute to the NAD(+) site; these read PI and QYR.

It belongs to the zinc-containing alcohol dehydrogenase family. In terms of assembly, homotetramer. Requires Zn(2+) as cofactor.

The catalysed reaction is L-arabinitol + NAD(+) = L-xylulose + NADH + H(+). It functions in the pathway carbohydrate degradation; L-arabinose degradation via L-arabinitol; D-xylulose 5-phosphate from L-arabinose (fungal route): step 2/5. Catalyzes the NAD-dependent oxidation of L-arabinitol to L-xylulose in the fungal L-arabinose catabolic pathway. L-arabinose catabolism is important for using plant material as a carbon source. Not active on D-arabinitol, D-sorbitol and D-mannitol. The protein is L-arabinitol 4-dehydrogenase (ard-1) of Neurospora crassa (strain ATCC 24698 / 74-OR23-1A / CBS 708.71 / DSM 1257 / FGSC 987).